The sequence spans 496 residues: UDP-N-acetylmuramoyl-L-alanyl-D-glutamate--2,6-diaminopimelate ligase (496 aa).

UDP-N-acetyl-alpha-D-muramoyl-L-alanyl-D-glutamate is bound by residues L24 and S26. 109–115 (GTNGKTS) serves as a coordination point for ATP. UDP-N-acetyl-alpha-D-muramoyl-L-alanyl-D-glutamate-binding positions include 151-152 (TT), S178, Q184, and R186. N6-carboxylysine is present on K218. Meso-2,6-diaminopimelate-binding positions include R387, 411–414 (DNPR), G462, and E466. The short motif at 411 to 414 (DNPR) is the Meso-diaminopimelate recognition motif element.

The protein belongs to the MurCDEF family. MurE subfamily. It depends on Mg(2+) as a cofactor. Post-translationally, carboxylation is probably crucial for Mg(2+) binding and, consequently, for the gamma-phosphate positioning of ATP.

It is found in the cytoplasm. The enzyme catalyses UDP-N-acetyl-alpha-D-muramoyl-L-alanyl-D-glutamate + meso-2,6-diaminopimelate + ATP = UDP-N-acetyl-alpha-D-muramoyl-L-alanyl-gamma-D-glutamyl-meso-2,6-diaminopimelate + ADP + phosphate + H(+). It participates in cell wall biogenesis; peptidoglycan biosynthesis. Its function is as follows. Catalyzes the addition of meso-diaminopimelic acid to the nucleotide precursor UDP-N-acetylmuramoyl-L-alanyl-D-glutamate (UMAG) in the biosynthesis of bacterial cell-wall peptidoglycan. In Pseudomonas putida (strain ATCC 47054 / DSM 6125 / CFBP 8728 / NCIMB 11950 / KT2440), this protein is UDP-N-acetylmuramoyl-L-alanyl-D-glutamate--2,6-diaminopimelate ligase.